We begin with the raw amino-acid sequence, 289 residues long: E3 ubiquitin-protein ligase MARCHF8 (289 aa).

The tract at residues Met1–Thr68 is disordered. A compositionally biased stretch (basic and acidic residues) spans Lys25–Leu39. Residues Ser50–Ser64 show a composition bias toward low complexity. The RING-CH-type zinc-finger motif lies at Val70 to Glu131. 8 residues coordinate Zn(2+): Cys78, Cys81, Cys95, Cys97, His105, Cys108, Cys121, and Cys124. 2 consecutive transmembrane segments (helical) span residues Cys155 to Ile175 and Phe195 to Val215.

As to quaternary structure, interacts with CD86.

It localises to the golgi apparatus membrane. The protein resides in the endoplasmic reticulum membrane. The protein localises to the cytoplasmic vesicle membrane. Its subcellular location is the lysosome membrane. It is found in the early endosome membrane. The catalysed reaction is S-ubiquitinyl-[E2 ubiquitin-conjugating enzyme]-L-cysteine + [acceptor protein]-L-lysine = [E2 ubiquitin-conjugating enzyme]-L-cysteine + N(6)-ubiquitinyl-[acceptor protein]-L-lysine.. It participates in protein modification; protein ubiquitination. Functionally, E3 ubiquitin-protein ligase that plays several important roles in innate immunity and adaptive immunity. Mediates ubiquitination of CD86 and MHC class II proteins, such as HLA-DR alpha and beta, and promotes their subsequent endocytosis and sorting to lysosomes via multivesicular bodies. Possesses a very broad antiviral activity by specifically inactivating different viral fusion proteins. Targets and ubiquitinates cytoplasmic lysine residues of viral envelope glycoproteins with single transmembrane domains leading to their lysosomal degradation. Mediates the regulation of constitutive ubiquitination and trafficking of the viral restriction factor BST2 within the endocytic pathway. Plays a role in maintenance of immune tolerance to self by promoting the turnover and proteasomal degradation of PD-L1/CD274 via ubiquitination. Catalyzes the 'Lys-63'-linked polyubiquitylation of cGAS thereby inhibiting its DNA binding ability and impairing its antiviral innate immunity. Negatively regulates IL7-mediated T-cell homeostasis by mediating 'Lys-27'-linked polyubiquitination of IL7R, leading to its lysosomal degradation. This Bos taurus (Bovine) protein is E3 ubiquitin-protein ligase MARCHF8 (MARCHF8).